We begin with the raw amino-acid sequence, 344 residues long: Dihydroorotate dehydrogenase (quinone) (344 aa).

Residues 65–69 (AGLDK) and threonine 89 each bind FMN. Lysine 69 serves as a coordination point for substrate. 114-118 (NRMGF) serves as a coordination point for substrate. Asparagine 145 and asparagine 178 together coordinate FMN. Residue asparagine 178 coordinates substrate. Serine 181 acts as the Nucleophile in catalysis. Asparagine 183 is a binding site for substrate. FMN is bound by residues lysine 223 and threonine 251. A substrate-binding site is contributed by 252 to 253 (NT). FMN contacts are provided by residues glycine 274, glycine 303, and 324–325 (YT).

Belongs to the dihydroorotate dehydrogenase family. Type 2 subfamily. In terms of assembly, monomer. Requires FMN as cofactor.

It localises to the cell membrane. It catalyses the reaction (S)-dihydroorotate + a quinone = orotate + a quinol. The protein operates within pyrimidine metabolism; UMP biosynthesis via de novo pathway; orotate from (S)-dihydroorotate (quinone route): step 1/1. Functionally, catalyzes the conversion of dihydroorotate to orotate with quinone as electron acceptor. The sequence is that of Dihydroorotate dehydrogenase (quinone) from Ralstonia nicotianae (strain ATCC BAA-1114 / GMI1000) (Ralstonia solanacearum).